Consider the following 237-residue polypeptide: Ribonuclease PH (237 aa).

Phosphate-binding positions include arginine 86 and 124–126 (GTR).

This sequence belongs to the RNase PH family. As to quaternary structure, homohexameric ring arranged as a trimer of dimers.

The catalysed reaction is tRNA(n+1) + phosphate = tRNA(n) + a ribonucleoside 5'-diphosphate. Its function is as follows. Phosphorolytic 3'-5' exoribonuclease that plays an important role in tRNA 3'-end maturation. Removes nucleotide residues following the 3'-CCA terminus of tRNAs; can also add nucleotides to the ends of RNA molecules by using nucleoside diphosphates as substrates, but this may not be physiologically important. Probably plays a role in initiation of 16S rRNA degradation (leading to ribosome degradation) during starvation. This chain is Ribonuclease PH, found in Nitrobacter hamburgensis (strain DSM 10229 / NCIMB 13809 / X14).